Consider the following 173-residue polypeptide: RNA pyrophosphohydrolase (173 aa).

The region spanning 6–149 (GYRPNVGIIL…KRHVYRRALR (144 aa)) is the Nudix hydrolase domain. Positions 38 to 59 (GGIRRDESPLDAMYRELAEETG) match the Nudix box motif.

Belongs to the Nudix hydrolase family. RppH subfamily. The cofactor is a divalent metal cation.

In terms of biological role, accelerates the degradation of transcripts by removing pyrophosphate from the 5'-end of triphosphorylated RNA, leading to a more labile monophosphorylated state that can stimulate subsequent ribonuclease cleavage. The chain is RNA pyrophosphohydrolase from Thioalkalivibrio sulfidiphilus (strain HL-EbGR7).